The primary structure comprises 250 residues: Peroxiredoxin (250 aa).

The region spanning Pro6–Leu163 is the Thioredoxin domain. Residue Cys50 is the Cysteine sulfenic acid (-SOH) intermediate of the active site. Residue Arg126 participates in substrate binding. The cysteines at positions 207 and 213 are disulfide-linked.

The protein belongs to the peroxiredoxin family. Prx6 subfamily. In terms of assembly, homodecamer. Pentamer of dimers that assemble into a ring structure.

The protein resides in the cytoplasm. The enzyme catalyses a hydroperoxide + [thioredoxin]-dithiol = an alcohol + [thioredoxin]-disulfide + H2O. Its function is as follows. Thiol-specific peroxidase that catalyzes the reduction of hydrogen peroxide and organic hydroperoxides to water and alcohols, respectively. Plays a role in cell protection against oxidative stress by detoxifying peroxides. This Aeropyrum pernix (strain ATCC 700893 / DSM 11879 / JCM 9820 / NBRC 100138 / K1) protein is Peroxiredoxin.